The chain runs to 56 residues: Large ribosomal subunit protein bL32 (56 aa).

Positions 1 to 20 are enriched in basic residues; that stretch reads MAVPKKKKSKSKRNHRHAVW. The tract at residues 1 to 21 is disordered; that stretch reads MAVPKKKKSKSKRNHRHAVWK.

It belongs to the bacterial ribosomal protein bL32 family.

In Prochlorococcus marinus (strain MIT 9312), this protein is Large ribosomal subunit protein bL32.